The chain runs to 329 residues: ATPase ASNA1 homolog 1 (329 aa).

26 to 33 is a binding site for ATP; that stretch reads KGGVGKTT. Aspartate 55 is a catalytic residue. The ATP site is built by glutamate 235 and asparagine 262. Zn(2+)-binding residues include cysteine 271 and cysteine 274.

Belongs to the arsA ATPase family. In terms of assembly, homodimer.

Its subcellular location is the cytoplasm. The protein localises to the endoplasmic reticulum. In terms of biological role, ATPase required for the post-translational delivery of tail-anchored (TA) proteins to the endoplasmic reticulum. Recognizes and selectively binds the transmembrane domain of TA proteins in the cytosol. This complex then targets to the endoplasmic reticulum by membrane-bound receptors, where the tail-anchored protein is released for insertion. This process is regulated by ATP binding and hydrolysis. ATP binding drives the homodimer towards the closed dimer state, facilitating recognition of newly synthesized TA membrane proteins. ATP hydrolysis is required for insertion. Subsequently, the homodimer reverts towards the open dimer state, lowering its affinity for the membrane-bound receptor, and returning it to the cytosol to initiate a new round of targeting. The polypeptide is ATPase ASNA1 homolog 1 (Paramecium tetraurelia).